Consider the following 141-residue polypeptide: Hemoglobin subunit alpha-D/D' (141 aa).

One can recognise a Globin domain in the interval 1–141 (MLTADDKKLI…VAAVLAEKYR (141 aa)). Residues His-58 and His-87 each coordinate heme b.

The protein belongs to the globin family. As to quaternary structure, heterotetramer of two alpha-D chains and two beta chains. In terms of tissue distribution, red blood cells.

In terms of biological role, involved in oxygen transport from the lung to the various peripheral tissues. The chain is Hemoglobin subunit alpha-D/D' (HBAD) from Gyps rueppelli (Rueppell's griffon).